The sequence spans 878 residues: Phosphoenolpyruvate carboxylase (878 aa).

Active-site residues include H137 and K545.

It belongs to the PEPCase type 1 family. Mg(2+) serves as cofactor.

It catalyses the reaction oxaloacetate + phosphate = phosphoenolpyruvate + hydrogencarbonate. Its function is as follows. Forms oxaloacetate, a four-carbon dicarboxylic acid source for the tricarboxylic acid cycle. The sequence is that of Phosphoenolpyruvate carboxylase from Photorhabdus laumondii subsp. laumondii (strain DSM 15139 / CIP 105565 / TT01) (Photorhabdus luminescens subsp. laumondii).